We begin with the raw amino-acid sequence, 427 residues long: Glutamate-1-semialdehyde 2,1-aminomutase 2 (427 aa).

Residue Lys-267 is modified to N6-(pyridoxal phosphate)lysine.

It belongs to the class-III pyridoxal-phosphate-dependent aminotransferase family. HemL subfamily. In terms of assembly, homodimer. The cofactor is pyridoxal 5'-phosphate.

The protein resides in the cytoplasm. It catalyses the reaction (S)-4-amino-5-oxopentanoate = 5-aminolevulinate. It functions in the pathway porphyrin-containing compound metabolism; protoporphyrin-IX biosynthesis; 5-aminolevulinate from L-glutamyl-tRNA(Glu): step 2/2. In Staphylococcus haemolyticus (strain JCSC1435), this protein is Glutamate-1-semialdehyde 2,1-aminomutase 2.